The sequence spans 427 residues: Delta(14)-sterol reductase (427 aa).

Over 1 to 25 (MSEQESRDNAAVDAVRQKYGFGFSW) the chain is Cytoplasmic. The chain crosses the membrane as a helical span at residues 26 to 46 (LVLMIALPPLVYYLWICVTYY). The Periplasmic segment spans residues 47-70 (QGELVFTSDAAAWRRFWSHVAPPT). A helical transmembrane segment spans residues 71–91 (WHAAGLYAAWFLGQAALQVWA). Residues 92–110 (PGPTVQGMKLPDGSRLDYR) are Cytoplasmic-facing. Residues 111–131 (MNGIFSFLFTLAVVFGLVTMG) form a helical membrane-spanning segment. Over 132-141 (WLDATVLYDQ) the chain is Periplasmic. The chain crosses the membrane as a helical span at residues 142 to 162 (LGPLLTVVNIFTFVFAGFLYF). Residues 163–197 (WGLNGKQWERPTGRPFYDYFMGTALNPRIGSLDLK) lie on the Cytoplasmic side of the membrane. Residues 198–218 (LFCEARPGMIFWLLMNLSMAA) form a helical membrane-spanning segment. Residues 219–226 (KQYELHGT) are Periplasmic-facing. A helical transmembrane segment spans residues 227 to 247 (VTVPMLLVVGFQSFYLIDYFI). Residues 248–262 (HEEAVLTTWDIKHEK) are Cytoplasmic-facing. The helical transmembrane segment at 263–283 (FGWMLCWGDLVWLPFTYTLQA) threads the bilayer. Residues 284–291 (QYLVHHTH) lie on the Periplasmic side of the membrane. Residues 292-312 (DLPVWGIIAIVALNLAGYAIF) traverse the membrane as a helical segment. Residues 313–356 (RGANIQKHHFRRDPNRIVWGKPAKYIKTKQGSLLLTSGWWGIAR) lie on the Cytoplasmic side of the membrane. NADP(+)-binding positions include lysine 319, arginine 323, leucine 347, tryptophan 352, and 359–360 (NY). A helical membrane pass occupies residues 357–377 (HMNYFGDLMIALSWCLPAAFG). Serine 378 is a topological domain (periplasmic). A helical membrane pass occupies residues 379 to 399 (PIPYFHIVYFTILLLHREKRD). NADP(+) contacts are provided by residues aspartate 399, 403–407 (CLAKY), and tyrosine 414. Topologically, residues 400–427 (DAMCLAKYGEDWLQYRKKVPWRIVPKIY) are cytoplasmic.

It belongs to the ERG4/ERG24 family.

It is found in the cell inner membrane. It catalyses the reaction 4,4-dimethyl-5alpha-cholesta-8,24-dien-3beta-ol + NADP(+) = 4,4-dimethyl-5alpha-cholesta-8,14,24-trien-3beta-ol + NADPH + H(+). Its pathway is steroid biosynthesis; zymosterol biosynthesis; zymosterol from lanosterol. Reduces the C14=C15 double bond of 4,4-dimethyl-cholesta-8,14,24-trienol to produce 4,4-dimethyl-cholesta-8,24-dienol. Complements the deletion of the Delta(14)-sterol reductase gene ERG24 in yeast. The sequence is that of Delta(14)-sterol reductase from Methylotuvimicrobium alcaliphilum (strain DSM 19304 / NCIMB 14124 / VKM B-2133 / 20Z) (Methylomicrobium alcaliphilum).